Reading from the N-terminus, the 510-residue chain is Maturase K (510 aa).

It belongs to the intron maturase 2 family. MatK subfamily.

The protein resides in the plastid. It localises to the chloroplast. In terms of biological role, usually encoded in the trnK tRNA gene intron. Probably assists in splicing its own and other chloroplast group II introns. This Grahamia bracteata protein is Maturase K.